Consider the following 143-residue polypeptide: Large ribosomal subunit protein uL13 (143 aa).

Belongs to the universal ribosomal protein uL13 family. In terms of assembly, part of the 50S ribosomal subunit.

In terms of biological role, this protein is one of the early assembly proteins of the 50S ribosomal subunit, although it is not seen to bind rRNA by itself. It is important during the early stages of 50S assembly. This Thermoanaerobacter pseudethanolicus (strain ATCC 33223 / 39E) (Clostridium thermohydrosulfuricum) protein is Large ribosomal subunit protein uL13.